The following is a 588-amino-acid chain: Succinate dehydrogenase flavoprotein subunit (588 aa).

Residues 14–19 (GAGGAG), 37–52 (SKVFPTRSHTVSAQGG), and Asp221 each bind FAD. At His45 the chain carries Tele-8alpha-FAD histidine. Positions 242 and 254 each coordinate substrate. The residue at position 267 (Lys267) is an N6-acetyllysine. Residue Arg286 is the Proton acceptor of the active site. His354 is a binding site for substrate. Glu388 serves as a coordination point for FAD. Arg399 is a binding site for substrate. 404 to 405 (SL) provides a ligand contact to FAD.

This sequence belongs to the FAD-dependent oxidoreductase 2 family. FRD/SDH subfamily. Part of an enzyme complex containing four subunits: a flavoprotein, an iron-sulfur, cytochrome b-556, and a hydrophobic anchor protein. The complex forms trimers. It depends on FAD as a cofactor.

It localises to the cell inner membrane. The enzyme catalyses a quinone + succinate = fumarate + a quinol. Its pathway is carbohydrate metabolism; tricarboxylic acid cycle; fumarate from succinate (bacterial route): step 1/1. Functionally, two distinct, membrane-bound, FAD-containing enzymes are responsible for the catalysis of fumarate and succinate interconversion; the fumarate reductase is used in anaerobic growth, and the succinate dehydrogenase is used in aerobic growth. The protein is Succinate dehydrogenase flavoprotein subunit (sdhA) of Escherichia coli O157:H7.